A 324-amino-acid chain; its full sequence is Probable tRNA pseudouridine synthase B (324 aa).

The active-site Nucleophile is the aspartate 72. The PUA domain occupies 239–314; sequence LPRVVILDSA…LVIETRKVFM (76 aa).

The protein belongs to the pseudouridine synthase TruB family. Type 2 subfamily.

The catalysed reaction is uridine(55) in tRNA = pseudouridine(55) in tRNA. Its function is as follows. Could be responsible for synthesis of pseudouridine from uracil-55 in the psi GC loop of transfer RNAs. This chain is Probable tRNA pseudouridine synthase B, found in Methanothermobacter thermautotrophicus (strain ATCC 29096 / DSM 1053 / JCM 10044 / NBRC 100330 / Delta H) (Methanobacterium thermoautotrophicum).